Reading from the N-terminus, the 383-residue chain is Lipid-A-disaccharide synthase (383 aa).

This sequence belongs to the LpxB family.

The catalysed reaction is a lipid X + a UDP-2-N,3-O-bis[(3R)-3-hydroxyacyl]-alpha-D-glucosamine = a lipid A disaccharide + UDP + H(+). It functions in the pathway bacterial outer membrane biogenesis; LPS lipid A biosynthesis. Functionally, condensation of UDP-2,3-diacylglucosamine and 2,3-diacylglucosamine-1-phosphate to form lipid A disaccharide, a precursor of lipid A, a phosphorylated glycolipid that anchors the lipopolysaccharide to the outer membrane of the cell. In Trichlorobacter lovleyi (strain ATCC BAA-1151 / DSM 17278 / SZ) (Geobacter lovleyi), this protein is Lipid-A-disaccharide synthase.